The chain runs to 499 residues: MNSNLLVLPILLPLLCALVLVFTKEKNRLSKILYIGTMSVNTVISLCLLIYVLQHKPITLDFGGWAAPYGIQFLGDSLSLVMVTVASFVVTLIMSYGFGRGEDRVNRYYLPTFILFLTTGVIGSFLTSDLFNLYVMFEIMLLASFVLVTLGQSVEQLRAAIIYVVLNIVGSWLFLLGIGLLYKTVGTLNFSQVALRLDQIHDNKAIIIISIVFIVAFGSKAALVLFMWLPKAYAVLNTELAALFAALMTKVGAYALIRFFTLLFDQHTGVTHPLLVFMSCITMLIGAFGVIAYRDIKKVASYQVILSIGFVILGLGSNTFAGVHGAIFYLANDIIVKTMLFFIIGSLVYMSGYREYKYLCGLAKKEPFFGVAFVVMIFAIGGVPPFSGFPGKVLIFQGAIENGNFIGLALMIITSLLAMYSLFRILFIMYFGDNDGEQVDFNPLPKHRKTILGILVAVVLAMGIAAPVVMNATENATKLNMDDNYFHSIVNSHLKEGNK.

14 helical membrane-spanning segments follow: residues 3–23, 32–52, 78–98, 108–128, 130–150, 161–181, 206–226, 240–260, 273–293, 308–328, 330–350, 368–388, 403–423, and 450–470; these read SNLL…LVFT, ILYI…LIYV, LSLV…SYGF, YYLP…FLTS, LFNL…LVTL, IIYV…IGLL, IIII…LVLF, LAAL…IRFF, PLLV…VIAY, IGFV…GAIF, LAND…LVYM, FFGV…PFSG, GNFI…YSLF, and TILG…PVVM.

Belongs to the CPA3 antiporters (TC 2.A.63) subunit D family. As to quaternary structure, may form a heterooligomeric complex that consists of seven subunits: mnhA2, mnhB2, mnhC2, mnhD2, mnhE2, mnhF2 and mnhG2.

It is found in the cell membrane. The chain is Putative antiporter subunit mnhD2 (mnhD2) from Staphylococcus haemolyticus (strain JCSC1435).